The primary structure comprises 205 residues: Guanylate kinase (205 aa).

The Guanylate kinase-like domain maps to 7–185 (GNIFIISAAS…AEEDLRHIVN (179 aa)). 14 to 21 (AASGTGKT) contributes to the ATP binding site.

It belongs to the guanylate kinase family.

The protein resides in the cytoplasm. It catalyses the reaction GMP + ATP = GDP + ADP. Its function is as follows. Essential for recycling GMP and indirectly, cGMP. This chain is Guanylate kinase (gmk), found in Neisseria meningitidis serogroup A / serotype 4A (strain DSM 15465 / Z2491).